A 272-amino-acid polypeptide reads, in one-letter code: MSTPTTPPRDAWARLRALTPARIALGRAGTSLPTASHLEFQLAHAQARDAVHLAFDPAPLQAVLQQRGRRSVLLHSAASDRHLYLQRPDLGRRLSDEAAEQLRGTTAVHGGGADLAVVVADGLSALAVHRHAGAMLEHIDALAAHEGWSLAPVTLIAQGRVAIGDEVGELLQAQAVIVLIGERPGLSSPDSLGLYLTYAPRVGHTDAARNCISNIRGEGLSYAEAGHKLGYLLREAFRRKLSGVQLKDEADRPLLGTDTASQAAPRNFLLPE.

Adenosylcob(III)alamin-binding residues include Val161, Glu182, and Cys211.

Belongs to the EutC family. In terms of assembly, the basic unit is a heterodimer which dimerizes to form tetramers. The heterotetramers trimerize; 6 large subunits form a core ring with 6 small subunits projecting outwards. Adenosylcob(III)alamin serves as cofactor.

It localises to the bacterial microcompartment. The enzyme catalyses ethanolamine = acetaldehyde + NH4(+). The protein operates within amine and polyamine degradation; ethanolamine degradation. Its function is as follows. Catalyzes the deamination of various vicinal amino-alcohols to oxo compounds. Allows this organism to utilize ethanolamine as the sole source of nitrogen and carbon in the presence of external vitamin B12. This Xanthomonas campestris pv. campestris (strain B100) protein is Ethanolamine ammonia-lyase small subunit.